We begin with the raw amino-acid sequence, 206 residues long: Ribosomal RNA large subunit methyltransferase E (206 aa).

G61, W63, D81, D97, and D122 together coordinate S-adenosyl-L-methionine. The Proton acceptor role is filled by K162.

This sequence belongs to the class I-like SAM-binding methyltransferase superfamily. RNA methyltransferase RlmE family.

It is found in the cytoplasm. The enzyme catalyses uridine(2552) in 23S rRNA + S-adenosyl-L-methionine = 2'-O-methyluridine(2552) in 23S rRNA + S-adenosyl-L-homocysteine + H(+). Functionally, specifically methylates the uridine in position 2552 of 23S rRNA at the 2'-O position of the ribose in the fully assembled 50S ribosomal subunit. This Neisseria meningitidis serogroup C (strain 053442) protein is Ribosomal RNA large subunit methyltransferase E.